Consider the following 766-residue polypeptide: Pyrophosphate-energized vacuolar membrane proton pump (766 aa).

Residues 2-8 (GAAILPD) are Intravacuolar-facing. A helical membrane pass occupies residues 9-35 (LGTEILIPVCAVIGIAFALFQWLLVSK). Over 36 to 84 (VKLSAVRDASPNAAAKNGYNDYLIEEEEGINDHNVVVKCAEIQNAISEG) the chain is Cytoplasmic. A helical transmembrane segment spans residues 85-114 (ATSFLFTEYKYVGIFMVAFAILIFLFLGSV). At 115–135 (EGFSTSPQACSYDKTKTCKPA) the chain is on the intravacuolar side. Cysteine 124 and cysteine 132 are oxidised to a cystine. A helical transmembrane segment spans residues 136-163 (LATAIFSTVSFLLGGVTSLVSGFLGMKI). The Cytoplasmic portion of the chain corresponds to 164 to 186 (ATYANARTTLEARKGVGKAFITA). Residues 187–216 (FRSGAVMGFLLAANGLLVLYIAINLFKIYY) traverse the membrane as a helical segment. Topologically, residues 217 to 219 (GDD) are intravacuolar. Residues 220 to 248 (WGGLFEAITGYGLGGSSMALFGRVGGGIY) traverse the membrane as a helical segment. Over 249–286 (TKAADVGADLVGKVERNIPEDDPRNPAVIADNVGDNVG) the chain is Cytoplasmic. A substrate-binding site is contributed by lysine 250. Mg(2+) is bound by residues aspartate 253, aspartate 257, and aspartate 283. The chain crosses the membrane as a helical span at residues 287–312 (DIAGMGSDLFGSYAESSCAALVVASI). Over 313 to 320 (SSFGLNHE) the chain is Intravacuolar. A helical transmembrane segment spans residues 321–346 (LTAMLYPLIVSSVGILVCLLTTLFAT). Residues 347–354 (DFFEIKAV) are Cytoplasmic-facing. A helical membrane pass occupies residues 355 to 382 (KEIEPALKKQLVISTVLMTIGVAVVSFV). Topologically, residues 383-401 (ALPTSFTIFNFGVQKDVKS) are intravacuolar. The chain crosses the membrane as a helical span at residues 402-425 (WQLFLCVAVGLWAGLIIGFVTEYY). Residues 426 to 447 (TSNAYSPVQDVADSCRTGAATN) are Cytoplasmic-facing. The chain crosses the membrane as a helical span at residues 448 to 472 (VIFGLALGYKSVIIPIFAIAISIFV). Topologically, residues 473-478 (SFTFAA) are intravacuolar. A helical transmembrane segment spans residues 479-505 (MYGIAVAALGMLSTIATGLAIDAYGPI). The Cytoplasmic portion of the chain corresponds to 506-534 (SDNAGGIAEMAGMSHRIRERTDALDAAGN). Mg(2+) contacts are provided by aspartate 507 and asparagine 534. Residues 535–563 (TTAAIGKGFAIGSAALVSLALFGAFVSRA) form a helical membrane-spanning segment. Topologically, residues 564-573 (SITTVDVLTP) are intravacuolar. A helical transmembrane segment spans residues 574–602 (KVFIGLIVGAMLPYWFSAMTMKSVGSAAL). Residues 603–631 (KMVEEVRRQFNTIPGLMEGTAKPDYATCV) lie on the Cytoplasmic side of the membrane. The chain crosses the membrane as a helical span at residues 632 to 660 (KISTDASIKEMIPPGALVMLTPLVVGILF). Glycine 661 is a topological domain (intravacuolar). The chain crosses the membrane as a helical span at residues 662–689 (VETLSGVLAGSLVSGVQIAISASNTGGA). At 690-732 (WDNAKKYIEAGASEHARSLGPKGSDCHKAAVIGDTIGDPLKDT) the chain is on the cytoplasmic side. Positions 691 and 727 each coordinate Mg(2+). Lysine 730 lines the substrate pocket. The helical transmembrane segment at 733–758 (SGPSLNILIKLMAVESLVFAPFFATH) threads the bilayer. The Intravacuolar segment spans residues 759 to 765 (GGLLFKI).

Belongs to the H(+)-translocating pyrophosphatase (TC 3.A.10) family. K(+)-stimulated subfamily. In terms of assembly, homodimer.

The protein resides in the vacuole membrane. The catalysed reaction is diphosphate + H2O + H(+)(in) = 2 phosphate + 2 H(+)(out). Its activity is regulated as follows. Inhibited by excess pyrophosphate as well as excess Mg(2+). Inhibition by ATP, GTP, and CTP is reversed by increasing the Mg(2+) concentration. This suggests that the substrate is a particular metal complex such as MgPPi(2-). Modification of Asp-283 with DCCD abolishes pyrophosphatase activity. Proton-translocating inorganic pyrophosphatase that contributes to the transtonoplast (from cytosol to vacuole lumen) H(+)-electrochemical potential difference. It establishes a proton gradient of similar and often greater magnitude than the H(+)-ATPase on the same membrane. This Vigna radiata var. radiata (Mung bean) protein is Pyrophosphate-energized vacuolar membrane proton pump.